Reading from the N-terminus, the 538-residue chain is Carboxypeptidase 2 (538 aa).

The N-terminal stretch at 1–21 is a signal peptide; that stretch reads MVAYRFLTLISLGLGSHCVSA. A glycan (N-linked (GlcNAc...) asparagine) is linked at N46. Residues 53-76 form a disordered region; it reads PAFTSPGTVSRGFSDGTSGPTRDE. The Peptidase M14 domain occupies 71-351; sequence GPTRDETMEG…VMAKSVLQTA (281 aa). 3 residues coordinate Zn(2+): H136, E139, and H224. E322 (proton donor/acceptor) is an active-site residue. Residues N393 and N459 are each glycosylated (N-linked (GlcNAc...) asparagine).

This sequence belongs to the peptidase M14 family. The cofactor is Zn(2+).

It is found in the secreted. Extracellular metalloprotease that contributes to pathogenicity. The protein is Carboxypeptidase 2 (MCPB) of Trichophyton rubrum (Athlete's foot fungus).